The chain runs to 901 residues: Putative receptor protein kinase CRINKLY4 (901 aa).

The signal sequence occupies residues 1–24 (MDHVPALVLAGCCFLALLPGWACG). At 25–423 (LGSMSSIAVS…SRKLMAFQMR (399 aa)) the chain is on the extracellular side. 7 tandem repeats follow at residues 33 to 68 (VSYGEDGPVFCGLNSDGSHLVACFGADASVLYGAPP), 72 to 107 (FLGLTAGDGFVCGLLLDTRQPYCWGSNSYVKSGVPQ), 125 to 160 (LCALRAAQDGGRGSSAATSLIDCWGYNMTATHAVDE), 162 to 195 (VSTVSAGSVFNCGLFARNRTVFCWGDETVSGVVG), 203 to 236 (FQSIGAGGYHVCGVLENAQVFCWGRSLEMQQVVP), 253 to 287 (MSTVVGGRFHACGIRSLDHQVACWGFTLHNSTSPP), and 292 to 330 (MYALVAGDYFTCGVPAETSLMPRCWGNSGPLALPMAVPP). The segment at 33 to 330 (VSYGEDGPVF…PLALPMAVPP (298 aa)) is 7 X 36 AA repeats. N-linked (GlcNAc...) asparagine glycosylation is found at Asn-151 and Asn-179. N-linked (GlcNAc...) asparagine glycosylation is present at Asn-282. Intrachain disulfides connect Cys-338/Cys-365, Cys-368/Cys-382, and Cys-372/Cys-390. The stretch at 357–391 (CKPANSRLCLPCSTGCPEGLYESSPCNATADRVCQ) is one TNFR-Cys repeat. N-linked (GlcNAc...) asparagine glycosylation occurs at Asn-383. A helical membrane pass occupies residues 424–444 (IFVAEIVFAVVLVLSVSVTTC). Over 445–901 (LYVRHKLRHC…QENLYLQHNF (457 aa)) the chain is Cytoplasmic. Residues 505–712 (FSEDSQVGKG…EILSGRKAID (208 aa)) form the Protein kinase domain. Residues 511–519 (VGKGSFSCV) and Lys-533 each bind ATP. The active-site Proton acceptor is the Asp-634. Residues 845–876 (VTSSQRRKSSASEADIVGRRATDGRNVGSSIG) form a disordered region.

The protein belongs to the protein kinase superfamily. Ser/Thr protein kinase family. In terms of assembly, homodimer.

Its subcellular location is the cell membrane. The protein localises to the endosome. It localises to the multivesicular body membrane. The enzyme catalyses L-seryl-[protein] + ATP = O-phospho-L-seryl-[protein] + ADP + H(+). It catalyses the reaction L-threonyl-[protein] + ATP = O-phospho-L-threonyl-[protein] + ADP + H(+). Functionally, putative receptor protein kinase. Could play a role in a differentiation signal. The CRINKLY4 (CR4) mutation affects leaf epidermis differentiation such that cell size and morphology are altered, and surface functions are compromised, allowing graft-like fusions between organs. The polypeptide is Putative receptor protein kinase CRINKLY4 (CR4) (Zea mays (Maize)).